A 532-amino-acid polypeptide reads, in one-letter code: Undecaprenyl-phosphate glucose phosphotransferase (532 aa).

Transmembrane regions (helical) follow at residues 81–101 (QVVV…CIAW), 110–130 (ELSG…FLFP), 155–175 (VAFG…PFGV), 183–203 (WLTF…YILH), and 344–364 (TASV…ALAI).

Belongs to the bacterial sugar transferase family.

The protein resides in the membrane. The catalysed reaction is di-trans,octa-cis-undecaprenyl phosphate + UDP-alpha-D-glucose = alpha-D-glucosyl di-trans,octa-cis-undecaprenyl diphosphate + UMP. Involved in the biosynthesis of the exopolysaccharide acetan, a water-soluble polysaccharide involved in production of bacterial cellulose (BC). This is Undecaprenyl-phosphate glucose phosphotransferase (aceA) from Komagataeibacter xylinus (Gluconacetobacter xylinus).